Consider the following 445-residue polypeptide: Phosphoglucosamine mutase (445 aa).

Residue S99 is the Phosphoserine intermediate of the active site. Positions 99, 242, 244, and 246 each coordinate Mg(2+). Residue S99 is modified to Phosphoserine.

Belongs to the phosphohexose mutase family. Requires Mg(2+) as cofactor. Activated by phosphorylation.

It catalyses the reaction alpha-D-glucosamine 1-phosphate = D-glucosamine 6-phosphate. Catalyzes the conversion of glucosamine-6-phosphate to glucosamine-1-phosphate. This chain is Phosphoglucosamine mutase, found in Campylobacter jejuni subsp. jejuni serotype O:6 (strain 81116 / NCTC 11828).